Here is a 332-residue protein sequence, read N- to C-terminus: DNA-directed RNA polymerase subunit alpha (332 aa).

The alpha N-terminal domain (alpha-NTD) stretch occupies residues 1-231; the sequence is MVREKVTVST…DLFIPFLHME (231 aa). Residues 262 to 332 form an alpha C-terminal domain (alpha-CTD) region; that stretch reads LSLESLFIDQ…FALDLPKNLN (71 aa).

Belongs to the RNA polymerase alpha chain family. In plastids the minimal PEP RNA polymerase catalytic core is composed of four subunits: alpha, beta, beta', and beta''. When a (nuclear-encoded) sigma factor is associated with the core the holoenzyme is formed, which can initiate transcription.

Its subcellular location is the plastid. The catalysed reaction is RNA(n) + a ribonucleoside 5'-triphosphate = RNA(n+1) + diphosphate. Its function is as follows. DNA-dependent RNA polymerase catalyzes the transcription of DNA into RNA using the four ribonucleoside triphosphates as substrates. The polypeptide is DNA-directed RNA polymerase subunit alpha (Cuscuta japonica (Japanese dodder)).